A 560-amino-acid chain; its full sequence is Serine palmitoyltransferase 2 (560 aa).

Residues 65–85 (PMLVAVLTYVGYGVLTLFGYL) traverse the membrane as a helical segment. Lys-377 carries the post-translational modification N6-(pyridoxal phosphate)lysine.

This sequence belongs to the class-II pyridoxal-phosphate-dependent aminotransferase family. As to quaternary structure, component of the serine palmitoyltransferase (SPT) complex, which is composed of SPTLC1, SPTLC2 or SPTLC3 and SPTSSA or SPTSSB. The heterodimer consisting of SPTLC1 and SPTLC2/SPTLC3 forms the catalytic core of the enzyme, while SPTSSA or SPTSSB subunits determine substrate specificity. SPT also interacts with ORMDL proteins, especially ORMDL3, which negatively regulate SPT activity in the presence of ceramides. Forms dimers of heterodimers with SPTLC1. Requires pyridoxal 5'-phosphate as cofactor. As to expression, expressed in a variety of tissues. Expressed in brains cortices (at protein level). Expressed in brown and white adipose tissues. Expressed in liver.

The protein localises to the endoplasmic reticulum membrane. The catalysed reaction is L-serine + hexadecanoyl-CoA + H(+) = 3-oxosphinganine + CO2 + CoA. It carries out the reaction octadecanoyl-CoA + L-serine + H(+) = 3-oxoeicosasphinganine + CO2 + CoA. The protein operates within lipid metabolism; sphingolipid metabolism. With respect to regulation, SPT complex catalytic activity is negatively regulated by ORMDL proteins, including ORMDL3, in the presence of ceramides. This mechanism allows to maintain ceramide levels at sufficient concentrations for the production of complex sphingolipids, but which prevents the accumulation of ceramides to levels that trigger apoptosis. Its function is as follows. Component of the serine palmitoyltransferase multisubunit enzyme (SPT) that catalyzes the initial and rate-limiting step in sphingolipid biosynthesis by condensing L-serine and activated acyl-CoA (most commonly palmitoyl-CoA) to form long-chain bases. The SPT complex is composed of SPTLC1, SPTLC2 or SPTLC3 and SPTSSA or SPTSSB. Within this complex, the heterodimer consisting of SPTLC1 and SPTLC2/SPTLC3 forms the catalytic core. The composition of the serine palmitoyltransferase (SPT) complex determines the substrate preference. The SPTLC1-SPTLC2-SPTSSA complex shows a strong preference for C16-CoA substrate, while the SPTLC1-SPTLC3-SPTSSA isozyme uses both C14-CoA and C16-CoA as substrates, with a slight preference for C14-CoA. The SPTLC1-SPTLC2-SPTSSB complex shows a strong preference for C18-CoA substrate, while the SPTLC1-SPTLC3-SPTSSB isozyme displays an ability to use a broader range of acyl-CoAs, without apparent preference. Crucial for adipogenesis. In Mus musculus (Mouse), this protein is Serine palmitoyltransferase 2.